Consider the following 963-residue polypeptide: Iron-responsive element-binding protein 2 (963 aa).

[4Fe-4S] cluster-binding residues include Cys512, Cys578, and Cys581.

The protein belongs to the aconitase/IPM isomerase family. As to quaternary structure, interacts with RBCK1 only in iron-rich conditions. Interacts (when associated with the 4Fe-4S) with FBXL5. Interacts with CIAO1 and CIAO2A. The cofactor is [4Fe-4S] cluster. Post-translationally, ubiquitinated and degraded by the proteasome in presence of high level of iron and oxygen. Ubiquitinated by a SCF complex containing FBXL5. Upon iron and oxygen depletion FBXL5 is degraded, preventing ubiquitination and allowing its RNA-binding activity. In terms of tissue distribution, ubiquitously expressed in rat tissues, the highest amounts present in skeletal muscle and heart.

It is found in the cytoplasm. Functionally, RNA-binding protein that binds to iron-responsive elements (IRES), which are stem-loop structures found in the 5'-UTR of ferritin, and delta aminolevulinic acid synthase mRNAs, and in the 3'-UTR of transferrin receptor mRNA. Binding to the IRE element in ferritin results in the repression of its mRNA translation. Binding of the protein to the transferrin receptor mRNA inhibits the degradation of this otherwise rapidly degraded mRNA. This is Iron-responsive element-binding protein 2 (Ireb2) from Rattus norvegicus (Rat).